The following is a 400-amino-acid chain: CCA-adding enzyme (400 aa).

Residues G28 and R31 each coordinate ATP. 2 residues coordinate CTP: G28 and R31. Residues D41 and D43 each contribute to the Mg(2+) site. R112, D155, R158, R161, and R164 together coordinate ATP. R112, D155, R158, R161, and R164 together coordinate CTP.

Belongs to the tRNA nucleotidyltransferase/poly(A) polymerase family. Bacterial CCA-adding enzyme type 3 subfamily. In terms of assembly, homodimer. It depends on Mg(2+) as a cofactor.

The catalysed reaction is a tRNA precursor + 2 CTP + ATP = a tRNA with a 3' CCA end + 3 diphosphate. The enzyme catalyses a tRNA with a 3' CCA end + 2 CTP + ATP = a tRNA with a 3' CCACCA end + 3 diphosphate. Its function is as follows. Catalyzes the addition and repair of the essential 3'-terminal CCA sequence in tRNAs without using a nucleic acid template. Adds these three nucleotides in the order of C, C, and A to the tRNA nucleotide-73, using CTP and ATP as substrates and producing inorganic pyrophosphate. tRNA 3'-terminal CCA addition is required both for tRNA processing and repair. Also involved in tRNA surveillance by mediating tandem CCA addition to generate a CCACCA at the 3' terminus of unstable tRNAs. While stable tRNAs receive only 3'-terminal CCA, unstable tRNAs are marked with CCACCA and rapidly degraded. The chain is CCA-adding enzyme from Oceanobacillus iheyensis (strain DSM 14371 / CIP 107618 / JCM 11309 / KCTC 3954 / HTE831).